The primary structure comprises 84 residues: Large ribosomal subunit protein bL27 (84 aa).

Positions 1-21 are disordered; that stretch reads MAHKKGGGSTKNGRDSNPQYL.

The protein belongs to the bacterial ribosomal protein bL27 family.

The protein is Large ribosomal subunit protein bL27 of Chloroherpeton thalassium (strain ATCC 35110 / GB-78).